Reading from the N-terminus, the 440-residue chain is Frizzled/smoothened-like sans CRD protein D (440 aa).

The first 27 residues, 1–27 (MFIILKFLISFFLICNFFNYNDHFASG), serve as a signal peptide directing secretion. Residues 28-85 (QTLPPGFCPSPLIYRNSTNRQNDIENGYLFIGQTNCTSPCPSLIFSENEWHRVYNMSL) are Extracellular-facing. N-linked (GlcNAc...) asparagine glycans are attached at residues asparagine 43, asparagine 62, and asparagine 82. A helical transmembrane segment spans residues 86–106 (IAGTISMFALIFLIITYSPLV). Topologically, residues 107–110 (NKYN) are cytoplasmic. The helical transmembrane segment at 111 to 131 (GYTRHTVGILFLFCGIFLTVT) threads the bilayer. The Extracellular segment spans residues 132–162 (TDGRQLWDIDLGFEKYCPEPGRFARQSDTKC). Residues 163–183 (LVTAIFFQYGCVTSILWWAAI) form a helical membrane-spanning segment. The Cytoplasmic segment spans residues 184–200 (SVDLWMTIRKVKISKLQ). A helical membrane pass occupies residues 201 to 221 (FITYAVILNIITLILTFAPIA). At 222–244 (SKQYGYGEAAIGCWLMDLKYQVG) the chain is on the extracellular side. Residues 245–265 (YFWAPVGFCLCVGCVSIVLII) form a helical membrane-spanning segment. The Cytoplasmic segment spans residues 266–285 (REIYKVSDAIKKKLLAKHLK). A helical membrane pass occupies residues 286-306 (PLMLIILMLSEFIYMFIFYSY). At 307-346 (TTSRRGHYHDVVEKYIRCLFINASNPSICEVDVSISSPAH) the chain is on the extracellular side. Asparagine 328 carries an N-linked (GlcNAc...) asparagine glycan. The helical transmembrane segment at 347-367 (FFFHFCMRLMGIEGLIFFGFT) threads the bilayer. Residues 368–440 (RQTKRIWLRS…IELSGVDSKN (73 aa)) lie on the Cytoplasmic side of the membrane. A disordered region spans residues 395-428 (ISSDEKTSNSSHRTTRGCRETEFGESIEQSNDPE).

This sequence belongs to the G-protein coupled receptor Fz/Smo family.

Its subcellular location is the membrane. In Dictyostelium discoideum (Social amoeba), this protein is Frizzled/smoothened-like sans CRD protein D (fscD).